A 312-amino-acid polypeptide reads, in one-letter code: Pantothenate kinase (312 aa).

An ATP-binding site is contributed by 97 to 104 (GSVAVGKS).

It belongs to the prokaryotic pantothenate kinase family.

Its subcellular location is the cytoplasm. It carries out the reaction (R)-pantothenate + ATP = (R)-4'-phosphopantothenate + ADP + H(+). It functions in the pathway cofactor biosynthesis; coenzyme A biosynthesis; CoA from (R)-pantothenate: step 1/5. The sequence is that of Pantothenate kinase from Corynebacterium glutamicum (strain ATCC 13032 / DSM 20300 / JCM 1318 / BCRC 11384 / CCUG 27702 / LMG 3730 / NBRC 12168 / NCIMB 10025 / NRRL B-2784 / 534).